A 442-amino-acid chain; its full sequence is Protein bag of marbles (442 aa).

The required for interaction with ubiquitin stretch occupies residues 201–250 (FDMPVKSTMPKSLNVRYQLQVLCTKVERFLVQQRRTLEANRHFDFEKYDE). The interval 408-442 (VSMEQPSASEEEFEETEEVPSSPPRHTGRVPRFRS) is disordered. Residues 416 to 425 (SEEEFEETEE) are compositionally biased toward acidic residues. Residues 433–442 (HTGRVPRFRS) show a composition bias toward basic residues.

As to quaternary structure, interacts (via central region) with ubiquitin. Interacts (via C-terminus) with otu (via OTU domain); the interaction enhances otu aggregation into amyloid-like structures and enhances its deubiquitinase activity. Together with otu interacts with CycA/cyclin-A (via C-terminus); the interaction stabilizes CycA by promoting and enhancing otu dependent deubiquitination of CycA. Together with otu interacts with Traf6. Part of a complex composed of at least tut, bam and bgcn; complex formation does not require RNA. Interacts (via C-terminus) with bgcn; the interaction is direct and is not disrupted by eIF4A. Interacts with eIF4A (via multiple contacts); the interaction is direct and is not disrupted by bgcn. Interacts (via N-terminus) with tut; the interaction is direct and mediates the interaction between tut and bgcn. As part of the bam-bgcn-tut complex associates with twin; may recruit the CCR4-NOT1 deadenylation complex to mRNA 3'-UTRs to mediate post-transcriptional regulation of expression. Part of a complex composed of at least mei-P26, bam, bgcn and Sxl; this complex is involved in translational repression of nanos mRNA. Post-translationally, ubiquitinated (C-terminal region). As to expression, in cystoblasts and/or very early cystocytes in testis (at protein level); expression levels are regulated by mei-P26. In cystoblasts and/or very early cystocytes in ovary. Expressed in the gut; expression levels increase with age.

The protein localises to the cytoplasm. In terms of biological role, regulatory component of a deubiquitinase complex consisting of bam and otu. The complex deubiquitinates K63-linked polyubiquitinated proteins, antagonizing the ubiquitination activity of Traf6 and regulating the IMD immune signaling pathway. Otu-bam deubiquitinase activity is regulated by Traf6 dependent immune signaling regulation of bam expression levels; this forms a feedback loop that regulates the IMD immune signaling pathway and balances gut immune activity during aging. The complex deubiquitinates and stabilizes CycA/cyclin-A to regulate CycA-dependent differentiation. Required to initiate both male and female gametogenesis. Part of a complex with bgcn involved in 3'-UTR-dependent translational repression of a subset of mRNAs, including those for mei-P26, nanos and shg/E-cadherin. Repression of mei-P26 is targeted by let-7 miRNA. Involved in a regulatory cascade with mei-P26 to control the progression of cystocytes through transit amplification and the switch to spermatocyte differentiation; mei-P26 facilitates bam accumulation, which in turn represses translation of mei-P26. Forms a complex with tut and bgcn involved in 3'-UTR-dependent post-transcriptional repression of several 3'-RNA processing factors, which promotes germline stem cell lineage differentiation and mitosis-to-meiosis transition. The protein is Protein bag of marbles of Drosophila melanogaster (Fruit fly).